The sequence spans 230 residues: Inactive L-threonine 3-dehydrogenase, mitochondrial (230 aa).

The protein belongs to the NAD(P)-dependent epimerase/dehydratase family. As to expression, expressed in all tissues examined. Detected in most cell types examined, but not observed in endothelial cells, glioma cell lines and some leukemia cell lines.

The protein localises to the mitochondrion. The sequence is that of Inactive L-threonine 3-dehydrogenase, mitochondrial from Homo sapiens (Human).